Consider the following 156-residue polypeptide: Small ribosomal subunit protein uS7 (156 aa).

This sequence belongs to the universal ribosomal protein uS7 family. Part of the 30S ribosomal subunit. Contacts proteins S9 and S11.

Its function is as follows. One of the primary rRNA binding proteins, it binds directly to 16S rRNA where it nucleates assembly of the head domain of the 30S subunit. Is located at the subunit interface close to the decoding center, probably blocks exit of the E-site tRNA. This Bartonella quintana (strain Toulouse) (Rochalimaea quintana) protein is Small ribosomal subunit protein uS7.